A 275-amino-acid polypeptide reads, in one-letter code: Tryptophan synthase alpha chain (275 aa).

Active-site proton acceptor residues include glutamate 49 and aspartate 60.

This sequence belongs to the TrpA family. Tetramer of two alpha and two beta chains.

It catalyses the reaction (1S,2R)-1-C-(indol-3-yl)glycerol 3-phosphate + L-serine = D-glyceraldehyde 3-phosphate + L-tryptophan + H2O. It functions in the pathway amino-acid biosynthesis; L-tryptophan biosynthesis; L-tryptophan from chorismate: step 5/5. Its function is as follows. The alpha subunit is responsible for the aldol cleavage of indoleglycerol phosphate to indole and glyceraldehyde 3-phosphate. In Psychrobacter sp. (strain PRwf-1), this protein is Tryptophan synthase alpha chain.